Consider the following 183-residue polypeptide: Guanylate kinase (183 aa).

Residues 4–182 (GRVVVLTGPS…AITALEAAIF (179 aa)) form the Guanylate kinase-like domain. An ATP-binding site is contributed by 11–18 (GPSGVGKG).

It belongs to the guanylate kinase family.

It localises to the cytoplasm. It carries out the reaction GMP + ATP = GDP + ADP. The enzyme catalyses dZMP + ATP = dZDP + ADP. It participates in purine metabolism. Essential for recycling GMP and indirectly, cGMP. Its function is as follows. (Microbial infection) Catalyzes the phosphorylation of dZMP to dZDP, when the bacterium is infected by a phage that produces the substrate for the synthesis of dZTP (2- amino-2'-deoxyadenosine 5'-triphosphate), which is then used by the phage as a DNA polymerase substrate. The sequence is that of Guanylate kinase from Synechococcus elongatus (strain ATCC 33912 / PCC 7942 / FACHB-805) (Anacystis nidulans R2).